Here is a 223-residue protein sequence, read N- to C-terminus: Phosphoribosylformylglycinamidine synthase subunit PurQ (223 aa).

The region spanning 4-223 (KIGVITFPGT…FLSAIGTIAA (220 aa)) is the Glutamine amidotransferase type-1 domain. Residue cysteine 87 is the Nucleophile of the active site. Active-site residues include histidine 195 and glutamate 197.

As to quaternary structure, part of the FGAM synthase complex composed of 1 PurL, 1 PurQ and 2 PurS subunits.

It localises to the cytoplasm. It carries out the reaction N(2)-formyl-N(1)-(5-phospho-beta-D-ribosyl)glycinamide + L-glutamine + ATP + H2O = 2-formamido-N(1)-(5-O-phospho-beta-D-ribosyl)acetamidine + L-glutamate + ADP + phosphate + H(+). It catalyses the reaction L-glutamine + H2O = L-glutamate + NH4(+). The protein operates within purine metabolism; IMP biosynthesis via de novo pathway; 5-amino-1-(5-phospho-D-ribosyl)imidazole from N(2)-formyl-N(1)-(5-phospho-D-ribosyl)glycinamide: step 1/2. Part of the phosphoribosylformylglycinamidine synthase complex involved in the purines biosynthetic pathway. Catalyzes the ATP-dependent conversion of formylglycinamide ribonucleotide (FGAR) and glutamine to yield formylglycinamidine ribonucleotide (FGAM) and glutamate. The FGAM synthase complex is composed of three subunits. PurQ produces an ammonia molecule by converting glutamine to glutamate. PurL transfers the ammonia molecule to FGAR to form FGAM in an ATP-dependent manner. PurS interacts with PurQ and PurL and is thought to assist in the transfer of the ammonia molecule from PurQ to PurL. This Corynebacterium efficiens (strain DSM 44549 / YS-314 / AJ 12310 / JCM 11189 / NBRC 100395) protein is Phosphoribosylformylglycinamidine synthase subunit PurQ.